Consider the following 311-residue polypeptide: Olfactory receptor 287 (311 aa).

Residues 1 to 27 (MAWSTGQNLSTPGPFILLGFPGPRSMR) are Extracellular-facing. Asn8 carries N-linked (GlcNAc...) asparagine glycosylation. The helical transmembrane segment at 28–53 (IGLFLLFLVMYLLTVVGNLAIISLVG) threads the bilayer. Topologically, residues 54–60 (AHRCLQT) are cytoplasmic. A helical membrane pass occupies residues 61–82 (PMYFFLCNLSFLEIWFTTACVP). Topologically, residues 83–103 (KTLATFAPRGGVISLAGCATQ) are extracellular. The cysteines at positions 100 and 192 are disulfide-linked. A helical membrane pass occupies residues 104–123 (MYFVFSLGCTEYFLLAVMAY). At 124 to 142 (DRYLAICLPLRYGGIMTPG) the chain is on the cytoplasmic side. Residues 143–161 (LAMRLALGSWLCGFSAITV) form a helical membrane-spanning segment. Topologically, residues 162-199 (PATLIARLSFCGSRVINHFFCDISPWIVLSCTDTQVVE) are extracellular. The chain crosses the membrane as a helical span at residues 200-222 (LVSFGIAFCVILGSCGITLVSYA). At 223-239 (YIITTIIKIPSARGRHR) the chain is on the cytoplasmic side. Residues 240-263 (AFSTCSSHLTVVLIWYGSTIFLHV) form a helical membrane-spanning segment. The Extracellular portion of the chain corresponds to 264–275 (RTSVESSLDLTK). A helical transmembrane segment spans residues 276-295 (AITVLNTIVTPVLNPFIYTL). The Cytoplasmic portion of the chain corresponds to 296–311 (RNKDVKEALRRTVKGK).

This sequence belongs to the G-protein coupled receptor 1 family. In terms of tissue distribution, olfactory epithelium.

It localises to the cell membrane. In terms of biological role, odorant receptor. The sequence is that of Olfactory receptor 287 (Olr287) from Rattus norvegicus (Rat).